A 385-amino-acid chain; its full sequence is Phosphatidate cytidylyltransferase, mitochondrial (385 aa).

Belongs to the TAM41 family. Mg(2+) is required as a cofactor. The cofactor is Co(2+). It depends on Cu(2+) as a cofactor.

It localises to the mitochondrion inner membrane. The enzyme catalyses a 1,2-diacyl-sn-glycero-3-phosphate + CTP + H(+) = a CDP-1,2-diacyl-sn-glycerol + diphosphate. The protein operates within phospholipid metabolism; CDP-diacylglycerol biosynthesis; CDP-diacylglycerol from sn-glycerol 3-phosphate: step 3/3. Functionally, catalyzes the formation of CDP-diacylglycerol (CDP-DAG) from phosphatidic acid (PA) in the mitochondrial inner membrane. Required for the biosynthesis of the dimeric phospholipid cardiolipin, which stabilizes supercomplexes of the mitochondrial respiratory chain in the mitochondrial inner membrane. This Saccharomyces cerevisiae (strain ATCC 204508 / S288c) (Baker's yeast) protein is Phosphatidate cytidylyltransferase, mitochondrial (TAM41).